We begin with the raw amino-acid sequence, 457 residues long: Argininosuccinate lyase (457 aa).

It belongs to the lyase 1 family. Argininosuccinate lyase subfamily.

It is found in the cytoplasm. The catalysed reaction is 2-(N(omega)-L-arginino)succinate = fumarate + L-arginine. The protein operates within amino-acid biosynthesis; L-arginine biosynthesis; L-arginine from L-ornithine and carbamoyl phosphate: step 3/3. The chain is Argininosuccinate lyase from Erwinia tasmaniensis (strain DSM 17950 / CFBP 7177 / CIP 109463 / NCPPB 4357 / Et1/99).